Here is a 295-residue protein sequence, read N- to C-terminus: Acetaldehyde dehydrogenase (295 aa).

An NAD(+)-binding site is contributed by 11–14 (SGNI). The Acyl-thioester intermediate role is filled by cysteine 127. NAD(+) contacts are provided by residues 158–166 (SAGPGTRAN) and asparagine 270.

This sequence belongs to the acetaldehyde dehydrogenase family.

The catalysed reaction is acetaldehyde + NAD(+) + CoA = acetyl-CoA + NADH + H(+). The sequence is that of Acetaldehyde dehydrogenase (nbaJ) from Geobacillus thermodenitrificans (strain NG80-2).